Reading from the N-terminus, the 259-residue chain is Putative protein phosphatase (259 aa).

A PPM-type phosphatase domain is found at 8 to 255; the sequence is LFASLSKKGP…DNITLNLINL (248 aa).

It carries out the reaction O-phospho-L-seryl-[protein] + H2O = L-seryl-[protein] + phosphate. The enzyme catalyses O-phospho-L-threonyl-[protein] + H2O = L-threonyl-[protein] + phosphate. The sequence is that of Putative protein phosphatase from Mycoplasma pneumoniae (strain ATCC 29342 / M129 / Subtype 1) (Mycoplasmoides pneumoniae).